The following is a 507-amino-acid chain: Lysine--tRNA ligase (507 aa).

Mg(2+) contacts are provided by glutamate 416 and glutamate 423.

Belongs to the class-II aminoacyl-tRNA synthetase family. In terms of assembly, homodimer. The cofactor is Mg(2+).

It is found in the cytoplasm. It catalyses the reaction tRNA(Lys) + L-lysine + ATP = L-lysyl-tRNA(Lys) + AMP + diphosphate. The chain is Lysine--tRNA ligase from Hahella chejuensis (strain KCTC 2396).